We begin with the raw amino-acid sequence, 186 residues long: MDTETLKKILQEKMDKALKVLDHELKGLRTGRASVNLLDSVTVEAYGSKMLLSQVASLSTPDARTINVQVWDKSMVSSVEKGITIANLGLTPATDGQLIRLPIPALTEERRKELVKLAHKYGEDAKISLRNIRRDGNEELKKLEKDNIIAKDEHHNLSEQVQKLTDEYSSKVDSAIKQKEQDIMTV.

This sequence belongs to the RRF family.

It localises to the cytoplasm. Functionally, responsible for the release of ribosomes from messenger RNA at the termination of protein biosynthesis. May increase the efficiency of translation by recycling ribosomes from one round of translation to another. This chain is Ribosome-recycling factor, found in Rickettsia akari (strain Hartford).